The following is a 492-amino-acid chain: Cysteine--tRNA ligase (492 aa).

C27 provides a ligand contact to Zn(2+). The 'HIGH' region signature appears at 29–39 (VTVYDLCHLGH). Zn(2+)-binding residues include C211, H236, and E240. A 'KMSKS' region motif is present at residues 268–272 (KMSKS). Position 271 (K271) interacts with ATP.

Belongs to the class-I aminoacyl-tRNA synthetase family. As to quaternary structure, monomer. The cofactor is Zn(2+).

Its subcellular location is the cytoplasm. The catalysed reaction is tRNA(Cys) + L-cysteine + ATP = L-cysteinyl-tRNA(Cys) + AMP + diphosphate. The sequence is that of Cysteine--tRNA ligase from Prochlorococcus marinus (strain MIT 9515).